The following is a 137-amino-acid chain: Small ribosomal subunit protein uS11 (137 aa).

Positions 1 to 11 (MPPKSRSTGPK) are enriched in polar residues. 2 disordered regions span residues 1–28 (MPPK…PHGA) and 117–137 (TISD…RRRV). Basic residues predominate over residues 12 to 21 (KTQKARRRDK).

It belongs to the universal ribosomal protein uS11 family. As to quaternary structure, part of the 30S ribosomal subunit. Interacts with proteins S7 and S18. Binds to IF-3.

Located on the platform of the 30S subunit, it bridges several disparate RNA helices of the 16S rRNA. Forms part of the Shine-Dalgarno cleft in the 70S ribosome. In Rhodococcus opacus (strain B4), this protein is Small ribosomal subunit protein uS11.